We begin with the raw amino-acid sequence, 211 residues long: 2,3-bisphosphoglycerate-dependent phosphoglycerate mutase (211 aa).

Residues 9–16 (RHGQSDWN), 22–23 (TG), Arg-61, 88–91 (ERDY), Lys-99, 115–116 (RR), and 159–160 (GN) each bind substrate. His-10 serves as the catalytic Tele-phosphohistidine intermediate. Catalysis depends on Glu-88, which acts as the Proton donor/acceptor.

The protein belongs to the phosphoglycerate mutase family. BPG-dependent PGAM subfamily. In terms of assembly, homodimer.

The enzyme catalyses (2R)-2-phosphoglycerate = (2R)-3-phosphoglycerate. It functions in the pathway carbohydrate degradation; glycolysis; pyruvate from D-glyceraldehyde 3-phosphate: step 3/5. Its function is as follows. Catalyzes the interconversion of 2-phosphoglycerate and 3-phosphoglycerate. The chain is 2,3-bisphosphoglycerate-dependent phosphoglycerate mutase from Rhizobium rhizogenes (strain K84 / ATCC BAA-868) (Agrobacterium radiobacter).